Consider the following 722-residue polypeptide: Polyribonucleotide nucleotidyltransferase (722 aa).

Mg(2+)-binding residues include Asp-487 and Asp-493. Positions 554-613 (PRMVSFKIHPDKIREVIGKGGATIQALTKETGCSIDIKDDGTVTIASTSAEGMAEAKARI) constitute a KH domain. Residues 623–691 (GKIYEGPVVK…ERGRLRLSLK (69 aa)) enclose the S1 motif domain.

This sequence belongs to the polyribonucleotide nucleotidyltransferase family. It depends on Mg(2+) as a cofactor.

It is found in the cytoplasm. It catalyses the reaction RNA(n+1) + phosphate = RNA(n) + a ribonucleoside 5'-diphosphate. Its function is as follows. Involved in mRNA degradation. Catalyzes the phosphorolysis of single-stranded polyribonucleotides processively in the 3'- to 5'-direction. This Polynucleobacter necessarius subsp. necessarius (strain STIR1) protein is Polyribonucleotide nucleotidyltransferase.